The chain runs to 128 residues: Ribonuclease pancreatic (128 aa).

The tract at residues 1-25 (KESSAKKFQRQHIDSSGSPSTNPNY) is disordered. Positions 7 and 10 each coordinate substrate. The active-site Proton acceptor is the His-12. Polar residues predominate over residues 14–25 (DSSGSPSTNPNY). 4 disulfides stabilise this stretch: Cys-26–Cys-84, Cys-40–Cys-95, Cys-58–Cys-110, and Cys-65–Cys-72. Residue Asn-34 is glycosylated (N-linked (GlcNAc...) asparagine). Substrate is bound by residues 41–45 (KPVNT), Lys-66, and Arg-85. Catalysis depends on His-119, which acts as the Proton donor.

Belongs to the pancreatic ribonuclease family. Monomer. Interacts with and forms tight 1:1 complexes with RNH1. Dimerization of two such complexes may occur. Interaction with RNH1 inhibits this protein. As to expression, pancreas.

Its subcellular location is the secreted. The enzyme catalyses an [RNA] containing cytidine + H2O = an [RNA]-3'-cytidine-3'-phosphate + a 5'-hydroxy-ribonucleotide-3'-[RNA].. It carries out the reaction an [RNA] containing uridine + H2O = an [RNA]-3'-uridine-3'-phosphate + a 5'-hydroxy-ribonucleotide-3'-[RNA].. In terms of biological role, endonuclease that catalyzes the cleavage of RNA on the 3' side of pyrimidine nucleotides. Acts on single-stranded and double-stranded RNA. This is Ribonuclease pancreatic (RNASE1) from Proechimys guairae (Guaira spiny rat).